The sequence spans 402 residues: uncharacterized protein (402 aa).

Belongs to the peptidase M20 family.

This is an uncharacterized protein from Sinorhizobium fredii (strain NBRC 101917 / NGR234).